The following is a 386-amino-acid chain: Bifunctional enzyme IspD/IspF (386 aa).

Positions 1-225 are 2-C-methyl-D-erythritol 4-phosphate cytidylyltransferase; it reads MYNFVTLSIL…SCLSAPSSDT (225 aa). A 2-C-methyl-D-erythritol 2,4-cyclodiphosphate synthase region spans residues 226-386; it reads LSGVGFDVHA…NLKYFDWTKI (161 aa). A divalent metal cation contacts are provided by Asp232 and His234. 4-CDP-2-C-methyl-D-erythritol 2-phosphate is bound by residues 232–234 and 258–259; these read DVH and HS. A divalent metal cation is bound at residue His266. 4-CDP-2-C-methyl-D-erythritol 2-phosphate is bound by residues 280–282, 285–289, 356–359, Phe363, and Arg366; these read DIG, FPDND, and TTTE.

This sequence in the N-terminal section; belongs to the IspD/TarI cytidylyltransferase family. IspD subfamily. In the C-terminal section; belongs to the IspF family. A divalent metal cation is required as a cofactor.

It carries out the reaction 2-C-methyl-D-erythritol 4-phosphate + CTP + H(+) = 4-CDP-2-C-methyl-D-erythritol + diphosphate. The catalysed reaction is 4-CDP-2-C-methyl-D-erythritol 2-phosphate = 2-C-methyl-D-erythritol 2,4-cyclic diphosphate + CMP. The protein operates within isoprenoid biosynthesis; isopentenyl diphosphate biosynthesis via DXP pathway; isopentenyl diphosphate from 1-deoxy-D-xylulose 5-phosphate: step 2/6. It participates in isoprenoid biosynthesis; isopentenyl diphosphate biosynthesis via DXP pathway; isopentenyl diphosphate from 1-deoxy-D-xylulose 5-phosphate: step 4/6. Its function is as follows. Bifunctional enzyme that catalyzes the formation of 4-diphosphocytidyl-2-C-methyl-D-erythritol from CTP and 2-C-methyl-D-erythritol 4-phosphate (MEP) (IspD), and catalyzes the conversion of 4-diphosphocytidyl-2-C-methyl-D-erythritol 2-phosphate (CDP-ME2P) to 2-C-methyl-D-erythritol 2,4-cyclodiphosphate (ME-CPP) with a corresponding release of cytidine 5-monophosphate (CMP) (IspF). This chain is Bifunctional enzyme IspD/IspF, found in Sulfurimonas denitrificans (strain ATCC 33889 / DSM 1251) (Thiomicrospira denitrificans (strain ATCC 33889 / DSM 1251)).